The sequence spans 293 residues: MNNRRFDCIGIVGHPRHPAALATHEILYHWLKARGYAVMVEQQIAHDLNLTDAITGSLADIGQKADLAVVVGGDGNMLGAARVLARYDIKVIGVNRGNLGFLTDLDPDNALQQLSDVLEGEYLSEQRFLLETHVRRTNQQSRISTAINEVVLHPGKVAHMIEFEVYIDDRFAFSQRSDGLIIATPTGSTAYSLSAGGPILTPTLDAIVLVPMFPHTLTARPLVISSSSTIRLKFSHITSDLEISCDSQIALPIQEGEEVLIRRSDFHLNLIHPKDYSYFNTLSTKLGWSKKLF.

The Proton acceptor role is filled by D74. Residues 74-75 (DG), 148-149 (NE), H159, R176, D178, T186, 189-194 (TAYSLS), and Q248 contribute to the NAD(+) site.

Belongs to the NAD kinase family. Homodimer. A divalent metal cation is required as a cofactor.

It is found in the cytoplasm. It carries out the reaction NAD(+) + ATP = ADP + NADP(+) + H(+). Its function is as follows. Involved in the regulation of the intracellular balance of NAD and NADP, and is a key enzyme in the biosynthesis of NADP. Catalyzes specifically the phosphorylation on 2'-hydroxyl of the adenosine moiety of NAD to yield NADP. The protein is NAD kinase of Yersinia pestis.